A 360-amino-acid chain; its full sequence is Peptide chain release factor 1 (360 aa).

Glutamine 236 bears the N5-methylglutamine mark.

Belongs to the prokaryotic/mitochondrial release factor family. In terms of processing, methylated by PrmC. Methylation increases the termination efficiency of RF1.

The protein resides in the cytoplasm. Functionally, peptide chain release factor 1 directs the termination of translation in response to the peptide chain termination codons UAG and UAA. The protein is Peptide chain release factor 1 of Ligilactobacillus salivarius (strain UCC118) (Lactobacillus salivarius).